A 614-amino-acid polypeptide reads, in one-letter code: Dihydroxy-acid dehydratase (614 aa).

D81 lines the Mg(2+) pocket. C122 serves as a coordination point for [2Fe-2S] cluster. Mg(2+)-binding residues include D123 and K124. K124 is modified (N6-carboxylysine). C193 is a [2Fe-2S] cluster binding site. E489 is a Mg(2+) binding site. S515 functions as the Proton acceptor in the catalytic mechanism.

It belongs to the IlvD/Edd family. Homodimer. The cofactor is [2Fe-2S] cluster. It depends on Mg(2+) as a cofactor.

It carries out the reaction (2R)-2,3-dihydroxy-3-methylbutanoate = 3-methyl-2-oxobutanoate + H2O. The catalysed reaction is (2R,3R)-2,3-dihydroxy-3-methylpentanoate = (S)-3-methyl-2-oxopentanoate + H2O. It functions in the pathway amino-acid biosynthesis; L-isoleucine biosynthesis; L-isoleucine from 2-oxobutanoate: step 3/4. The protein operates within amino-acid biosynthesis; L-valine biosynthesis; L-valine from pyruvate: step 3/4. Functions in the biosynthesis of branched-chain amino acids. Catalyzes the dehydration of (2R,3R)-2,3-dihydroxy-3-methylpentanoate (2,3-dihydroxy-3-methylvalerate) into 2-oxo-3-methylpentanoate (2-oxo-3-methylvalerate) and of (2R)-2,3-dihydroxy-3-methylbutanoate (2,3-dihydroxyisovalerate) into 2-oxo-3-methylbutanoate (2-oxoisovalerate), the penultimate precursor to L-isoleucine and L-valine, respectively. In Saccharophagus degradans (strain 2-40 / ATCC 43961 / DSM 17024), this protein is Dihydroxy-acid dehydratase.